Here is a 368-residue protein sequence, read N- to C-terminus: Alanine racemase (368 aa).

The active-site Proton acceptor; specific for D-alanine is lysine 40. Position 40 is an N6-(pyridoxal phosphate)lysine (lysine 40). Arginine 134 is a substrate binding site. Residue tyrosine 263 is the Proton acceptor; specific for L-alanine of the active site. Methionine 310 contributes to the substrate binding site.

The protein belongs to the alanine racemase family. Requires pyridoxal 5'-phosphate as cofactor.

The catalysed reaction is L-alanine = D-alanine. Its pathway is amino-acid biosynthesis; D-alanine biosynthesis; D-alanine from L-alanine: step 1/1. Functionally, catalyzes the interconversion of L-alanine and D-alanine. May also act on other amino acids. This is Alanine racemase (alr) from Listeria monocytogenes serotype 1/2a (strain 10403S).